Consider the following 994-residue polypeptide: Beta-galactosidase (994 aa).

The active-site Proton donor is glutamate 437. The Nucleophile role is filled by glutamate 510.

Belongs to the glycosyl hydrolase 2 family.

It carries out the reaction Hydrolysis of terminal non-reducing beta-D-galactose residues in beta-D-galactosides.. This chain is Beta-galactosidase (lacZ), found in Staphylococcus xylosus.